The chain runs to 597 residues: Arginine--tRNA ligase (597 aa).

A 'HIGH' region motif is present at residues 137–147; the sequence is PNIAKEMHVGH.

It belongs to the class-I aminoacyl-tRNA synthetase family. Monomer.

The protein resides in the cytoplasm. The enzyme catalyses tRNA(Arg) + L-arginine + ATP = L-arginyl-tRNA(Arg) + AMP + diphosphate. This chain is Arginine--tRNA ligase, found in Parasynechococcus marenigrum (strain WH8102).